The following is a 162-amino-acid chain: Caveolin-2 (162 aa).

Topologically, residues 1–86 (MGLETEKADV…FEISKYVIYK (86 aa)) are cytoplasmic. Residue Tyr19 is modified to Phosphotyrosine; by SRC. Phosphoserine is present on residues Ser20 and Ser23. Position 27 is a phosphotyrosine; by SRC (Tyr27). At Ser36 the chain carries Phosphoserine. The helical intramembrane region spans 87–107 (FLTFFLAIPMAFAAGILFAIL). Residues 108 to 162 (SCLHIWIIMPFVKTCLMVLPSVQTIWKTITDVVIAPLCTSVGRSFSSISLQLSHD) are Cytoplasmic-facing.

Belongs to the caveolin family. In terms of assembly, monomer or homodimer. Interacts with CAV1; the interaction forms a stable heterooligomeric complex that is required for targeting to lipid rafts and for caveolae formation. Tyrosine phosphorylated forms do not form heterooligomers with the Tyr-19-phosphorylated form existing as a monomer or dimer, and the Tyr-27-form as a monomer only. Interacts (tyrosine phosphorylated form) with the SH2 domain-containing proteins, RASA1, NCK1 and SRC. Interacts (tyrosine phosphorylated form) with INSR, the interaction (Tyr-27-phosphorylated form) is increased on insulin stimulation. Interacts (Tyr-19 phosphorylated form) with MAPK1 (phosphorylated form); the interaction, promoted by insulin, leads to nuclear location and MAPK1 activation. Interacts with STAT3; the interaction is increased on insulin-induced tyrosine phosphorylation leading to STAT activation. Phosphorylated on serine and tyrosine residues. CAV1 promotes phosphorylation on Ser-23 which then targets the complex to the plasma membrane, lipid rafts and caveolae. Phosphorylation on Ser-36 appears to modulate mitosis in endothelial cells. Phosphorylation on both Tyr-19 and Tyr-27 is required for insulin-induced 'Ser-727' phosphorylation of STAT3 and its activation. Phosphorylation on Tyr-19 is required for insulin-induced phosphorylation of MAPK1 and DNA binding of STAT3. Tyrosine phosphorylation is induced by both EGF and insulin (By. similarity).

Its subcellular location is the nucleus. The protein localises to the cytoplasm. The protein resides in the golgi apparatus membrane. It localises to the cell membrane. It is found in the membrane. Its subcellular location is the caveola. May act as a scaffolding protein within caveolar membranes. Interacts directly with G-protein alpha subunits and can functionally regulate their activity. Acts as an accessory protein in conjunction with CAV1 in targeting to lipid rafts and driving caveolae formation. The Ser-36 phosphorylated form has a role in modulating mitosis in endothelial cells. Positive regulator of cellular mitogenesis of the MAPK signaling pathway. Required for the insulin-stimulated nuclear translocation and activation of MAPK1 and STAT3, and the subsequent regulation of cell cycle progression. The sequence is that of Caveolin-2 (CAV2) from Mustela putorius furo (European domestic ferret).